A 196-amino-acid polypeptide reads, in one-letter code: GTP cyclohydrolase 1 (196 aa).

Zn(2+) contacts are provided by Cys-86, His-89, and Cys-158.

Belongs to the GTP cyclohydrolase I family. In terms of assembly, homomer.

It catalyses the reaction GTP + H2O = 7,8-dihydroneopterin 3'-triphosphate + formate + H(+). It functions in the pathway cofactor biosynthesis; 7,8-dihydroneopterin triphosphate biosynthesis; 7,8-dihydroneopterin triphosphate from GTP: step 1/1. The chain is GTP cyclohydrolase 1 from Clostridium botulinum (strain Kyoto / Type A2).